Reading from the N-terminus, the 174-residue chain is Shikimate kinase 2 (174 aa).

12-17 is a binding site for ATP; that stretch reads GAGKTT. 2 residues coordinate Mg(2+): Thr16 and Asp32. Substrate is bound by residues Asp34, Arg58, and Gly79. Residues 112–126 are LID domain; that stretch reads MQQPESTQRPSLTGK. Position 120 (Arg120) interacts with ATP. Arg139 serves as a coordination point for substrate.

This sequence belongs to the shikimate kinase family. AroL subfamily. Monomer. Mg(2+) serves as cofactor.

The protein resides in the cytoplasm. The catalysed reaction is shikimate + ATP = 3-phosphoshikimate + ADP + H(+). It participates in metabolic intermediate biosynthesis; chorismate biosynthesis; chorismate from D-erythrose 4-phosphate and phosphoenolpyruvate: step 5/7. In terms of biological role, catalyzes the specific phosphorylation of the 3-hydroxyl group of shikimic acid using ATP as a cosubstrate. The polypeptide is Shikimate kinase 2 (Photorhabdus laumondii subsp. laumondii (strain DSM 15139 / CIP 105565 / TT01) (Photorhabdus luminescens subsp. laumondii)).